The following is a 368-amino-acid chain: Protein HGH1 homolog (368 aa).

Belongs to the HGH1 family.

This chain is Protein HGH1 homolog, found in Drosophila pseudoobscura pseudoobscura (Fruit fly).